The following is a 345-amino-acid chain: Adenine deaminase (345 aa).

Residues histidine 20, histidine 22, and histidine 204 each coordinate Zn(2+). Residue glutamate 207 is the Proton donor of the active site. Aspartate 285 is a Zn(2+) binding site. Residue aspartate 286 coordinates substrate.

This sequence belongs to the metallo-dependent hydrolases superfamily. Adenosine and AMP deaminases family. Adenine deaminase type 2 subfamily. The cofactor is Zn(2+).

The catalysed reaction is adenine + H2O + H(+) = hypoxanthine + NH4(+). In terms of biological role, catalyzes the hydrolytic deamination of adenine to hypoxanthine. Plays an important role in the purine salvage pathway and in nitrogen catabolism. The polypeptide is Adenine deaminase (Ralstonia nicotianae (strain ATCC BAA-1114 / GMI1000) (Ralstonia solanacearum)).